Consider the following 70-residue polypeptide: Dermaseptin-H3 (70 aa).

The signal sequence occupies residues 1 to 22 (MAFLKKSLFLVLFLGMVSLSIC). Residues 23-43 (EEEKRENEDEELQEDDEQSEM) constitute a propeptide that is removed on maturation. Positions 25–44 (EKRENEDEELQEDDEQSEMK) are disordered. The span at 30–40 (EDEELQEDDEQ) shows a compositional bias: acidic residues. Leucine 70 carries the post-translational modification Leucine amide.

Expressed by the skin glands.

The protein resides in the secreted. In terms of biological role, has antibacterial activity against the Gram-negative bacteria E.coli and P.aeruginosa, and the Gram-positive bacteria S.aureus and M.luteus. Has antiprotozoal activity against L.amazonensis. No hemolytic activity. The chain is Dermaseptin-H3 from Pithecopus hypochondrialis (Orange-legged leaf frog).